We begin with the raw amino-acid sequence, 272 residues long: Shikimate dehydrogenase (NADP(+)) (272 aa).

Residues 14–16 and Thr-61 each bind shikimate; that span reads SLS. Residue Lys-65 is the Proton acceptor of the active site. Asp-102 serves as a coordination point for shikimate. Residues 127-131, 151-156, and Leu-215 each bind NADP(+); these read GAGGA and NRTPSK. Tyr-217 contributes to the shikimate binding site. Gly-239 lines the NADP(+) pocket.

It belongs to the shikimate dehydrogenase family. In terms of assembly, homodimer.

The catalysed reaction is shikimate + NADP(+) = 3-dehydroshikimate + NADPH + H(+). The protein operates within metabolic intermediate biosynthesis; chorismate biosynthesis; chorismate from D-erythrose 4-phosphate and phosphoenolpyruvate: step 4/7. Its function is as follows. Involved in the biosynthesis of the chorismate, which leads to the biosynthesis of aromatic amino acids. Catalyzes the reversible NADPH linked reduction of 3-dehydroshikimate (DHSA) to yield shikimate (SA). The polypeptide is Shikimate dehydrogenase (NADP(+)) (Coxiella burnetii (strain CbuK_Q154) (Coxiella burnetii (strain Q154))).